Consider the following 86-residue polypeptide: MAEKRKYSKKYCKYTEAKVEFIDYKDTTLLKYCLSERFKIMPRRLTGTSKKYQEMVEKAIKRARHVALIPYIVDRDNVVTNPFEGM.

The protein belongs to the bacterial ribosomal protein bS18 family. In terms of assembly, part of the 30S ribosomal subunit. Forms a tight heterodimer with protein bS6.

Functionally, binds as a heterodimer with protein bS6 to the central domain of the 16S rRNA, where it helps stabilize the platform of the 30S subunit. The protein is Small ribosomal subunit protein bS18 of Campylobacter fetus subsp. fetus (strain 82-40).